The primary structure comprises 917 residues: Sensor histidine kinase GacS (917 aa).

Transmembrane regions (helical) follow at residues 11 to 31 and 168 to 188; these read VLLL…GYFT and SLFA…LLAV. The region spanning 192 to 244 is the HAMP domain; it reads RTINNPLTQIKQAVAQLKDGNLETRLPPLGSQELDELASGINRMASTLQNAQE. Positions 291-512 constitute a Histidine kinase domain; sequence NMSHEIRTPL…EFWISLNLPK (222 aa). H294 is modified (phosphohistidine; by autocatalysis). The Response regulatory domain occupies 668–787; that stretch reads RVLCVDDNPA…QLAQVVLKWT (120 aa). D717 carries the post-translational modification 4-aspartylphosphate. The region spanning 824-917 is the HPt domain; it reads KADLAADMLA…RLAAEARTNA (94 aa). A Phosphohistidine modification is found at H863.

Post-translationally, activation requires a sequential transfer of a phosphate group from a His in the primary transmitter domain, to an Asp in the receiver domain and to a His in the secondary transmitter domain.

It localises to the cell inner membrane. The catalysed reaction is ATP + protein L-histidine = ADP + protein N-phospho-L-histidine.. In terms of biological role, member of the two-component regulatory system GacA/GacS which controls the expression of secondary metabolites and extracellular products. Activates GacA by phosphorylation. GacA acts (probably primarily) by activating expression of CsrA1 and CsrA2 antagonist small RNAs (sRNA) RsmX, RsmY and RsmZ which bind to and prevent translation repression by CsrA1 and CsrA2. Involved in the regulation of secondary metabolism and in the synthesis of the antifungal factors cyanide, 2,4-diacetylphloroglucinol and pyoluteorin. Exercises positive post-transcriptional control over the hcnABC and aprA genes; acts upstream of CsrA2 (rsmA). Controls expression of CsrA1 and CsrA2 antagonist sRNAs RsmX, RsmY and probably RsmZ. Probably controls expression of csrA1 (rsmE) and csrA2. The polypeptide is Sensor histidine kinase GacS (gacS) (Pseudomonas protegens (strain DSM 19095 / LMG 27888 / CFBP 6595 / CHA0)).